A 242-amino-acid chain; its full sequence is Anthranilate phosphoribosyltransferase (242 aa).

5-phospho-alpha-D-ribose 1-diphosphate-binding positions include Gly79, 82 to 83 (GD), Thr87, 89 to 92 (NVST), 107 to 115 (KHGNRAVSS), and Ser119. Gly79 provides a ligand contact to anthranilate. Ser91 lines the Mg(2+) pocket. Asn110 contacts anthranilate. Arg165 serves as a coordination point for anthranilate. Residues Asp224 and Glu225 each coordinate Mg(2+).

It belongs to the anthranilate phosphoribosyltransferase family. Homodimer. Mg(2+) serves as cofactor.

The catalysed reaction is N-(5-phospho-beta-D-ribosyl)anthranilate + diphosphate = 5-phospho-alpha-D-ribose 1-diphosphate + anthranilate. It participates in amino-acid biosynthesis; L-tryptophan biosynthesis; L-tryptophan from chorismate: step 2/5. Its function is as follows. Catalyzes the transfer of the phosphoribosyl group of 5-phosphorylribose-1-pyrophosphate (PRPP) to anthranilate to yield N-(5'-phosphoribosyl)-anthranilate (PRA). The protein is Anthranilate phosphoribosyltransferase (trpD) of Bacillus caldotenax.